The primary structure comprises 396 residues: Flavohemoprotein (396 aa).

The 136-residue stretch at 1 to 136 folds into the Globin domain; it reads MLDAQTIATV…LANVFIHREA (136 aa). Position 85 (His85) interacts with heme b. Catalysis depends on charge relay system residues Tyr95 and Glu135. A reductase region spans residues 147–396; that stretch reads GGWEGTRPFR…YECFGPHKVL (250 aa). Positions 150-255 constitute an FAD-binding FR-type domain; it reads EGTRPFRIVA…AAPAGDFFMN (106 aa). FAD contacts are provided by residues Tyr188 and 204-207; that span reads RQYS. 268–273 is a binding site for NADP(+); it reads GVGQTP. 389–392 provides a ligand contact to FAD; sequence CFGP.

Belongs to the globin family. Two-domain flavohemoproteins subfamily. This sequence in the C-terminal section; belongs to the flavoprotein pyridine nucleotide cytochrome reductase family. The cofactor is heme b. FAD is required as a cofactor.

It catalyses the reaction 2 nitric oxide + NADPH + 2 O2 = 2 nitrate + NADP(+) + H(+). It carries out the reaction 2 nitric oxide + NADH + 2 O2 = 2 nitrate + NAD(+) + H(+). Functionally, is involved in NO detoxification in an aerobic process, termed nitric oxide dioxygenase (NOD) reaction that utilizes O(2) and NAD(P)H to convert NO to nitrate, which protects the bacterium from various noxious nitrogen compounds. Therefore, plays a central role in the inducible response to nitrosative stress. This chain is Flavohemoprotein, found in Salmonella typhi.